A 246-amino-acid chain; its full sequence is Bis(5'-nucleosyl)-tetraphosphatase PrpE [asymmetrical] (246 aa).

Belongs to the PrpE family. It depends on Ni(2+) as a cofactor.

It carries out the reaction P(1),P(4)-bis(5'-guanosyl) tetraphosphate + H2O = GMP + GTP + 2 H(+). In terms of biological role, asymmetrically hydrolyzes Ap4p to yield AMP and ATP. The protein is Bis(5'-nucleosyl)-tetraphosphatase PrpE [asymmetrical] of Bacillus cereus (strain 03BB102).